Consider the following 931-residue polypeptide: Translation initiation factor IF-2 (931 aa).

The disordered stretch occupies residues 32–310 (KSASSTVEPP…SSKARKNRLA (279 aa)). Over residues 50–59 (FASSGQGNAS) the composition is skewed to polar residues. A compositionally biased stretch (pro residues) spans 82–96 (PAAPSAPKPAAPAAP). Positions 156–168 (GNAPQGGNNANGA) are enriched in low complexity. Gly residues-rich tracts occupy residues 217–238 (RPGQ…GGAK), 248–271 (GQGG…GFQG), and 281–298 (ARGG…GRQG). The 173-residue stretch at 424–596 (PRPPVVTVMG…VLLTADAELD (173 aa)) folds into the tr-type G domain. Residues 433-440 (GHVDHGKT) form a G1 region. 433–440 (GHVDHGKT) serves as a coordination point for GTP. The tract at residues 458-462 (GITQR) is G2. The segment at 483–486 (DTPG) is G3. Residues 483–487 (DTPGH) and 537–540 (NKID) contribute to the GTP site. The G4 stretch occupies residues 537 to 540 (NKID). Residues 573 to 575 (SAK) are G5.

Belongs to the TRAFAC class translation factor GTPase superfamily. Classic translation factor GTPase family. IF-2 subfamily.

It localises to the cytoplasm. One of the essential components for the initiation of protein synthesis. Protects formylmethionyl-tRNA from spontaneous hydrolysis and promotes its binding to the 30S ribosomal subunits. Also involved in the hydrolysis of GTP during the formation of the 70S ribosomal complex. The protein is Translation initiation factor IF-2 of Bifidobacterium adolescentis (strain ATCC 15703 / DSM 20083 / NCTC 11814 / E194a).